The following is a 200-amino-acid chain: Nucleoside triphosphate pyrophosphatase (200 aa).

Catalysis depends on Asp-79, which acts as the Proton acceptor.

It belongs to the Maf family. A divalent metal cation is required as a cofactor.

It is found in the cytoplasm. The catalysed reaction is a ribonucleoside 5'-triphosphate + H2O = a ribonucleoside 5'-phosphate + diphosphate + H(+). The enzyme catalyses a 2'-deoxyribonucleoside 5'-triphosphate + H2O = a 2'-deoxyribonucleoside 5'-phosphate + diphosphate + H(+). In terms of biological role, nucleoside triphosphate pyrophosphatase. May have a dual role in cell division arrest and in preventing the incorporation of modified nucleotides into cellular nucleic acids. This Legionella pneumophila (strain Corby) protein is Nucleoside triphosphate pyrophosphatase.